The sequence spans 1488 residues: Chromosome partition protein MukB (1488 aa).

G34 to S41 serves as a coordination point for ATP. Coiled coils occupy residues L326–Q418, L444–H472, and R509–P602. Positions P666–R783 are flexible hinge. Coiled coils occupy residues E835–E923, E977–G1116, and V1209–V1265. The tract at residues A1049–R1074 is disordered. Residues S1051–H1065 show a composition bias toward basic and acidic residues.

It belongs to the SMC family. MukB subfamily. As to quaternary structure, homodimerization via its hinge domain. Binds to DNA via its C-terminal region. Interacts, and probably forms a ternary complex, with MukE and MukF via its C-terminal region. The complex formation is stimulated by calcium or magnesium. Interacts with tubulin-related protein FtsZ.

The protein localises to the cytoplasm. It is found in the nucleoid. Functionally, plays a central role in chromosome condensation, segregation and cell cycle progression. Functions as a homodimer, which is essential for chromosome partition. Involved in negative DNA supercoiling in vivo, and by this means organize and compact chromosomes. May achieve or facilitate chromosome segregation by condensation DNA from both sides of a centrally located replisome during cell division. The sequence is that of Chromosome partition protein MukB from Salmonella typhimurium (strain LT2 / SGSC1412 / ATCC 700720).